A 545-amino-acid polypeptide reads, in one-letter code: ATP synthase subunit alpha (545 aa).

173 to 180 (GDRQTGKS) is a binding site for ATP.

The protein belongs to the ATPase alpha/beta chains family. F-type ATPases have 2 components, CF(1) - the catalytic core - and CF(0) - the membrane proton channel. CF(1) has five subunits: alpha(3), beta(3), gamma(1), delta(1), epsilon(1). CF(0) has three main subunits: a(1), b(2) and c(9-12). The alpha and beta chains form an alternating ring which encloses part of the gamma chain. CF(1) is attached to CF(0) by a central stalk formed by the gamma and epsilon chains, while a peripheral stalk is formed by the delta and b chains.

The protein resides in the cell membrane. It catalyses the reaction ATP + H2O + 4 H(+)(in) = ADP + phosphate + 5 H(+)(out). Its function is as follows. Produces ATP from ADP in the presence of a proton gradient across the membrane. The alpha chain is a regulatory subunit. The polypeptide is ATP synthase subunit alpha (Pseudarthrobacter chlorophenolicus (strain ATCC 700700 / DSM 12829 / CIP 107037 / JCM 12360 / KCTC 9906 / NCIMB 13794 / A6) (Arthrobacter chlorophenolicus)).